Consider the following 83-residue polypeptide: Apolipoprotein C-I (83 aa).

An N-terminal signal peptide occupies residues 1 to 26 (MRLILSLPVLAVVLAMVLEGPAPAQA).

Belongs to the apolipoprotein C1 family.

The protein resides in the secreted. Its function is as follows. Inhibitor of lipoprotein binding to the low density lipoprotein (LDL) receptor, LDL receptor-related protein, and very low density lipoprotein (VLDL) receptor. Associates with high density lipoproteins (HDL) and the triacylglycerol-rich lipoproteins in the plasma and makes up about 10% of the protein of the VLDL and 2% of that of HDL. Appears to interfere directly with fatty acid uptake and is also the major plasma inhibitor of cholesteryl ester transfer protein (CETP). Binds free fatty acids and reduces their intracellular esterification. Modulates the interaction of APOE with beta-migrating VLDL and inhibits binding of beta-VLDL to the LDL receptor-related protein. This Eonycteris spelaea (Lesser dawn bat) protein is Apolipoprotein C-I (APOC1).